Here is a 565-residue protein sequence, read N- to C-terminus: Sialate:O-sulfotransferase 2 (565 aa).

The Cytoplasmic segment spans residues 1–18; it reads MAKLWFKFQRYFRRKPVR. The helical; Signal-anchor for type II membrane protein transmembrane segment at 19–41 threads the bilayer; the sequence is FFTFLALYLTAGSLVFLHSGFVG. Residues 42 to 565 are Extracellular-facing; it reads QPAVSGNQAN…TGVPDDYYPR (524 aa). WSC domains lie at 127–219 and 230–324; these read RAKY…YRLQ and SAVF…YQTQ. 2 N-linked (GlcNAc...) asparagine glycosylation sites follow: N189 and N242.

The protein belongs to the WSCD family.

The protein resides in the golgi apparatus membrane. Its function is as follows. Sialate:O-sulfotransferase which catalyzes 8-O-sulfation at the Sia-glycan level using 3'-phosphoadenosine 5'-phosphosulfate (PAPS) as a donor, forming 8-O-sulfated Sia (Sia8S)-glycans. Displays selectivity toward glycoproteins such as TF/transferrin. The polypeptide is Sialate:O-sulfotransferase 2 (WSCD2) (Homo sapiens (Human)).